The chain runs to 691 residues: Lectin-domain containing receptor kinase VI.4 (691 aa).

The signal sequence occupies residues 1–19 (MGRAKSMVSLLLVLFLVRA). Residues 20 to 306 (HVATTETTTE…AKKRGYNGKV (287 aa)) lie on the Extracellular side of the membrane. Positions 26–273 (TTTEFIFHGF…AHYVMGWSFA (248 aa)) are legume-lectin like. A helical membrane pass occupies residues 307 to 327 (IALIVALSTVISIMLVLLFLF). At 328-691 (MMYKKRMQQE…ISSTSLISGR (364 aa)) the chain is on the cytoplasmic side. The Protein kinase domain occupies 363-641 (FKENRVVGTG…LNRDEDVPEI (279 aa)). ATP is bound by residues 369–377 (VGTGGFGIV) and Lys392. Asp491 functions as the Proton acceptor in the catalytic mechanism.

The protein in the C-terminal section; belongs to the protein kinase superfamily. Ser/Thr protein kinase family. It in the N-terminal section; belongs to the leguminous lectin family.

The protein resides in the cell membrane. The catalysed reaction is L-seryl-[protein] + ATP = O-phospho-L-seryl-[protein] + ADP + H(+). It catalyses the reaction L-threonyl-[protein] + ATP = O-phospho-L-threonyl-[protein] + ADP + H(+). Involved in negative regulation of abscisic acid response in seed germination. The polypeptide is Lectin-domain containing receptor kinase VI.4 (LECRK64) (Arabidopsis thaliana (Mouse-ear cress)).